The following is a 503-amino-acid chain: Cytosol aminopeptidase (503 aa).

Residues Lys269 and Asp274 each contribute to the Mn(2+) site. Lys281 is an active-site residue. 3 residues coordinate Mn(2+): Asp292, Asp351, and Glu353. Arg355 is a catalytic residue.

This sequence belongs to the peptidase M17 family. Mn(2+) is required as a cofactor.

Its subcellular location is the cytoplasm. It carries out the reaction Release of an N-terminal amino acid, Xaa-|-Yaa-, in which Xaa is preferably Leu, but may be other amino acids including Pro although not Arg or Lys, and Yaa may be Pro. Amino acid amides and methyl esters are also readily hydrolyzed, but rates on arylamides are exceedingly low.. It catalyses the reaction Release of an N-terminal amino acid, preferentially leucine, but not glutamic or aspartic acids.. Functionally, presumably involved in the processing and regular turnover of intracellular proteins. Catalyzes the removal of unsubstituted N-terminal amino acids from various peptides. The chain is Cytosol aminopeptidase from Vibrio cholerae serotype O1 (strain ATCC 39541 / Classical Ogawa 395 / O395).